The primary structure comprises 765 residues: Probable ATP-dependent RNA helicase DDX27 (765 aa).

The disordered stretch occupies residues 1-48 (MLSELGFIRTIGEDEDVQVEPETDSEDEEEEGPIVLGRKQKALQKNRS). A compositionally biased stretch (acidic residues) spans 13–32 (EDEDVQVEPETDSEDEEEEG). Phosphoserine is present on residues S25 and S48. Positions 55–57 (FVF) match the Required for interaction with the PEBOW complex motif. Residues 88 to 148 (EKIEKVRKKR…ESETDYSSAD (61 aa)) form a disordered region. The span at 98 to 119 (KTEDKEAKSGKSEKEKEAKEGS) shows a compositional bias: basic and acidic residues. 2 positions are modified to phosphoserine: S135 and S146. The Nuclear localization signal signature appears at 164–169 (KKKKKK). The Q motif motif lies at 187–215 (LSFQDMNLSRPLLKAITAMGFKQPTPIQK). The Helicase ATP-binding domain occupies 218–392 (IPVGLLGKDI…SVSLKNPVRI (175 aa)). 231-238 (AATGTGKT) serves as a coordination point for ATP. Residues 340–343 (DEAD) carry the DEAD box motif. Residues 426–572 (LLMRTFTDHV…DVILKFRDKI (147 aa)) form the Helicase C-terminal domain. Basic residues-rich tracts occupy residues 685–694 (KRNRRAKRAR) and 744–765 (LGLPHQRRGGNFKSKSRYKRRK). The disordered stretch occupies residues 685 to 765 (KRNRRAKRAR…KSKSRYKRRK (81 aa)).

It belongs to the DEAD box helicase family. DDX27/DRS1 subfamily. In terms of assembly, associates with PeBoW complex, composed of BOP1, PES1 and WDR12. Interacts directly with BOP1 and PES1.

It is found in the nucleus. The protein localises to the nucleolus. It localises to the chromosome. It catalyses the reaction ATP + H2O = ADP + phosphate + H(+). Its function is as follows. Probable ATP-dependent RNA helicase. Component of the nucleolar ribosomal RNA (rRNA) processing machinery that regulates 3' end formation of ribosomal 47S rRNA. In Bos taurus (Bovine), this protein is Probable ATP-dependent RNA helicase DDX27 (DDX27).